The following is a 253-amino-acid chain: Imidazole glycerol phosphate synthase subunit HisF (253 aa).

Catalysis depends on residues D11 and D130.

This sequence belongs to the HisA/HisF family. As to quaternary structure, heterodimer of HisH and HisF.

The protein localises to the cytoplasm. The enzyme catalyses 5-[(5-phospho-1-deoxy-D-ribulos-1-ylimino)methylamino]-1-(5-phospho-beta-D-ribosyl)imidazole-4-carboxamide + L-glutamine = D-erythro-1-(imidazol-4-yl)glycerol 3-phosphate + 5-amino-1-(5-phospho-beta-D-ribosyl)imidazole-4-carboxamide + L-glutamate + H(+). Its pathway is amino-acid biosynthesis; L-histidine biosynthesis; L-histidine from 5-phospho-alpha-D-ribose 1-diphosphate: step 5/9. IGPS catalyzes the conversion of PRFAR and glutamine to IGP, AICAR and glutamate. The HisF subunit catalyzes the cyclization activity that produces IGP and AICAR from PRFAR using the ammonia provided by the HisH subunit. In Clostridium botulinum (strain Kyoto / Type A2), this protein is Imidazole glycerol phosphate synthase subunit HisF.